A 426-amino-acid chain; its full sequence is Enolase (426 aa).

The interval 32–53 (TGRAAVPSGASTGAYEAHEQRD) is disordered. Gln163 is a binding site for (2R)-2-phosphoglycerate. Glu205 acts as the Proton donor in catalysis. Mg(2+) contacts are provided by Asp242, Glu285, and Asp312. (2R)-2-phosphoglycerate is bound by residues Lys337, Arg366, Ser367, and Lys388. Residue Lys337 is the Proton acceptor of the active site.

The protein belongs to the enolase family. Mg(2+) is required as a cofactor.

It is found in the cytoplasm. It localises to the secreted. The protein localises to the cell surface. It catalyses the reaction (2R)-2-phosphoglycerate = phosphoenolpyruvate + H2O. Its pathway is carbohydrate degradation; glycolysis; pyruvate from D-glyceraldehyde 3-phosphate: step 4/5. Its function is as follows. Catalyzes the reversible conversion of 2-phosphoglycerate (2-PG) into phosphoenolpyruvate (PEP). It is essential for the degradation of carbohydrates via glycolysis. The polypeptide is Enolase (Hyphomonas neptunium (strain ATCC 15444)).